The sequence spans 212 residues: Dephospho-CoA kinase (212 aa).

In terms of domain architecture, DPCK spans 6–211; the sequence is RLGLTGGIGS…LSCQPLSPNQ (206 aa). Residue 14-19 coordinates ATP; that stretch reads GSGKST.

This sequence belongs to the CoaE family.

It localises to the cytoplasm. It carries out the reaction 3'-dephospho-CoA + ATP = ADP + CoA + H(+). It functions in the pathway cofactor biosynthesis; coenzyme A biosynthesis; CoA from (R)-pantothenate: step 5/5. Its function is as follows. Catalyzes the phosphorylation of the 3'-hydroxyl group of dephosphocoenzyme A to form coenzyme A. The polypeptide is Dephospho-CoA kinase (Albidiferax ferrireducens (strain ATCC BAA-621 / DSM 15236 / T118) (Rhodoferax ferrireducens)).